Here is a 489-residue protein sequence, read N- to C-terminus: Poly(A) RNA polymerase GLD2 (489 aa).

Positions 93 to 118 (RQRFSCPSPHNQSARNSNFTSQPVTR) are disordered. Over residues 100–116 (SPHNQSARNSNFTSQPV) the composition is skewed to polar residues. Residues Asp-219 and Asp-221 each contribute to the Mg(2+) site. The PAP-associated domain maps to 386-440 (SLGDLFLGFLRYYATVFKWDKQVISVRMARTLPKSNCKEWKDKFICVEEPFNRTN).

The protein belongs to the DNA polymerase type-B-like family. GLD2 subfamily. Mg(2+) serves as cofactor. Mn(2+) is required as a cofactor.

It is found in the cytoplasm. The enzyme catalyses RNA(n) + ATP = RNA(n)-3'-adenine ribonucleotide + diphosphate. Functionally, cytoplasmic poly(A) RNA polymerase that adds successive AMP monomers to the 3'-end of specific RNAs, forming a poly(A) tail. In contrast to the canonical nuclear poly(A) RNA polymerase, it only adds poly(A) to selected cytoplasmic mRNAs. May not play a role in replication-dependent histone mRNA degradation. The protein is Poly(A) RNA polymerase GLD2 of Danio rerio (Zebrafish).